The sequence spans 62 residues: Photosystem II reaction center protein H (62 aa).

The helical transmembrane segment at 30–50 (PVMAGIGFMLLIFLVTILQIY) threads the bilayer.

This sequence belongs to the PsbH family. As to quaternary structure, PSII is composed of 1 copy each of membrane proteins PsbA, PsbB, PsbC, PsbD, PsbE, PsbF, PsbH, PsbI, PsbJ, PsbK, PsbL, PsbM, PsbT, PsbX, PsbY, Psb30/Ycf12, peripheral proteins PsbO, CyanoQ (PsbQ), PsbU, PsbV and a large number of cofactors. It forms dimeric complexes.

The protein localises to the cellular thylakoid membrane. Its function is as follows. One of the components of the core complex of photosystem II (PSII), required for its stability and/or assembly. PSII is a light-driven water:plastoquinone oxidoreductase that uses light energy to abstract electrons from H(2)O, generating O(2) and a proton gradient subsequently used for ATP formation. It consists of a core antenna complex that captures photons, and an electron transfer chain that converts photonic excitation into a charge separation. The sequence is that of Photosystem II reaction center protein H from Prochlorococcus marinus (strain MIT 9303).